Consider the following 116-residue polypeptide: NADPH-dependent 7-cyano-7-deazaguanine reductase (116 aa).

Catalysis depends on cysteine 31, which acts as the Thioimide intermediate. Residue aspartate 38 is the Proton donor of the active site. Substrate is bound by residues 53–55 (VEL) and 72–73 (YE).

Belongs to the GTP cyclohydrolase I family. QueF type 1 subfamily.

It is found in the cytoplasm. It carries out the reaction 7-aminomethyl-7-carbaguanine + 2 NADP(+) = 7-cyano-7-deazaguanine + 2 NADPH + 3 H(+). Its pathway is tRNA modification; tRNA-queuosine biosynthesis. Functionally, catalyzes the NADPH-dependent reduction of 7-cyano-7-deazaguanine (preQ0) to 7-aminomethyl-7-deazaguanine (preQ1). The sequence is that of NADPH-dependent 7-cyano-7-deazaguanine reductase from Chlorobium phaeobacteroides (strain DSM 266 / SMG 266 / 2430).